We begin with the raw amino-acid sequence, 225 residues long: Non-structural protein V (225 aa).

Positions Ser-145 to Asp-157 are enriched in polar residues. Residues Ser-145–Asn-173 form a disordered region. Residues His-174, Cys-193, Cys-197, Cys-209, Cys-211, Cys-214, Cys-218, and Cys-221 each contribute to the Zn(2+) site.

Belongs to the paramyxoviruses V protein family. Interacts with host IFIH1/MDA5 and DHX58/LGP2. Forms with host DDB1, CUL4A, STAT1 and STAT2 the HPIV2 virus V-dependent complex (VDC); this complex targets host STAT2 to proteasomal degradation.

The protein localises to the host nucleus. Functionally, plays an essential role in the inhibition of host immune response. Prevents the establishment of cellular antiviral state by blocking interferon-alpha/beta (IFN-alpha/beta) production and signaling pathway. Interacts with host IFIH1/MDA5 and DHX58/LGP2 to inhibit the transduction pathway involved in the activation of IFN-beta promoter, thus protecting the virus against cell antiviral state. Efficiently blocks type I IFN signaling following infection by targeting host STAT2 for proteasomal degradation. Also plays a role in viral growth by promoting host RhoA-induced F-actin formation. The polypeptide is Non-structural protein V (P/V) (Homo sapiens (Human)).